The following is a 122-amino-acid chain: MIKQLDKKALRQKRHLRVRKNVRGTSEKPRLTVFKSQKHIYAQIIDDTKGVTLASASTTQKQLKEKLEKTWDENAAKEVGKLIAEKAKEKGITEIVFDRSGYKYHGKVKALAEAARETGLKF.

It belongs to the universal ribosomal protein uL18 family. In terms of assembly, part of the 50S ribosomal subunit; part of the 5S rRNA/L5/L18/L25 subcomplex. Contacts the 5S and 23S rRNAs.

Its function is as follows. This is one of the proteins that bind and probably mediate the attachment of the 5S RNA into the large ribosomal subunit, where it forms part of the central protuberance. This chain is Large ribosomal subunit protein uL18, found in Petrotoga mobilis (strain DSM 10674 / SJ95).